The primary structure comprises 85 residues: MAHKKGASSSRNGRDSAAQRLGVKRFGGQVVKAGEILVRQRGTHFHPGVNVGRGGDDTLFATSAGTVEFGARRGRRVVNILPVDA.

It belongs to the bacterial ribosomal protein bL27 family.

This chain is Large ribosomal subunit protein bL27, found in Mycobacteroides abscessus (strain ATCC 19977 / DSM 44196 / CCUG 20993 / CIP 104536 / JCM 13569 / NCTC 13031 / TMC 1543 / L948) (Mycobacterium abscessus).